A 560-amino-acid chain; its full sequence is Dihydroxy-acid dehydratase (560 aa).

A [2Fe-2S] cluster-binding site is contributed by C50. Mg(2+) is bound at residue D82. [2Fe-2S] cluster is bound at residue C123. D124 and K125 together coordinate Mg(2+). K125 carries the N6-carboxylysine modification. C195 serves as a coordination point for [2Fe-2S] cluster. E447 contacts Mg(2+). S473 functions as the Proton acceptor in the catalytic mechanism.

Belongs to the IlvD/Edd family. As to quaternary structure, homodimer. The cofactor is [2Fe-2S] cluster. Requires Mg(2+) as cofactor.

The enzyme catalyses (2R)-2,3-dihydroxy-3-methylbutanoate = 3-methyl-2-oxobutanoate + H2O. It catalyses the reaction (2R,3R)-2,3-dihydroxy-3-methylpentanoate = (S)-3-methyl-2-oxopentanoate + H2O. It participates in amino-acid biosynthesis; L-isoleucine biosynthesis; L-isoleucine from 2-oxobutanoate: step 3/4. Its pathway is amino-acid biosynthesis; L-valine biosynthesis; L-valine from pyruvate: step 3/4. In terms of biological role, functions in the biosynthesis of branched-chain amino acids. Catalyzes the dehydration of (2R,3R)-2,3-dihydroxy-3-methylpentanoate (2,3-dihydroxy-3-methylvalerate) into 2-oxo-3-methylpentanoate (2-oxo-3-methylvalerate) and of (2R)-2,3-dihydroxy-3-methylbutanoate (2,3-dihydroxyisovalerate) into 2-oxo-3-methylbutanoate (2-oxoisovalerate), the penultimate precursor to L-isoleucine and L-valine, respectively. The polypeptide is Dihydroxy-acid dehydratase (Methylibium petroleiphilum (strain ATCC BAA-1232 / LMG 22953 / PM1)).